We begin with the raw amino-acid sequence, 393 residues long: Elongation factor Tu (393 aa).

Residues 10 to 203 enclose the tr-type G domain; the sequence is KPHVNIGTIG…AVDEFIPEPL (194 aa). The segment at 19–26 is G1; it reads GHVDHGKT. Residue 19–26 coordinates GTP; sequence GHVDHGKT. Threonine 26 serves as a coordination point for Mg(2+). A G2 region spans residues 60 to 64; sequence GITIS. The segment at 81–84 is G3; sequence DCPG. Residues 81-85 and 136-139 each bind GTP; these read DCPGH and NKVD. The G4 stretch occupies residues 136-139; the sequence is NKVD. Positions 173 to 175 are G5; it reads SAL.

It belongs to the TRAFAC class translation factor GTPase superfamily. Classic translation factor GTPase family. EF-Tu/EF-1A subfamily. As to quaternary structure, monomer.

Its subcellular location is the cytoplasm. The enzyme catalyses GTP + H2O = GDP + phosphate + H(+). Its function is as follows. GTP hydrolase that promotes the GTP-dependent binding of aminoacyl-tRNA to the A-site of ribosomes during protein biosynthesis. In Chlorobium phaeobacteroides (strain DSM 266 / SMG 266 / 2430), this protein is Elongation factor Tu.